Reading from the N-terminus, the 511-residue chain is Synaptotagmin-6 (511 aa).

Residues 1 to 59 lie on the Vesicular side of the membrane; that stretch reads MSGVWGAGGPRCQAALAVLASLCRARPPPLGLDVETCRSFELQSPEQSPSAADSGTSVS. Residues 12–38 form a cysteine motif region; it reads CQAALAVLASLCRARPPPLGLDVETCR. A helical transmembrane segment spans residues 60–80; sequence LLAVVVIVCGVALVAVFLFLF. Residues 81 to 511 lie on the Cytoplasmic side of the membrane; the sequence is WKLCWMPWRK…KSFKEGTPRL (431 aa). 2 disordered regions span residues 92–119 and 157–182; these read EASS…ADKL and TKLQ…LPRQ. The segment covering 94–103 has biased composition (low complexity); the sequence is SSPSSANPAS. 2 stretches are compositionally biased toward polar residues: residues 104-113 and 160-172; these read ETLQSPSSRG and QRQT…STRH. Serine 217 bears the Phosphoserine mark. 2 C2 domains span residues 230–351 and 362–495; these read SCGK…SIWK and DLGE…AHWH. The Ca(2+) site is built by aspartate 261, aspartate 267, aspartate 319, phenylalanine 320, aspartate 321, serine 324, aspartate 327, aspartate 393, aspartate 399, aspartate 453, and aspartate 455. The interval 483–511 is necessary for cell membrane association (isoform 2); that stretch reads MLAYPRKPIAHWHSLVEVKKSFKEGTPRL.

It belongs to the synaptotagmin family. In terms of assembly, isoform 1: Homodimer; disulfide-linked via the cysteine motif. Isoform 1: Can also form heterodimers with SYT3, SYT7, SYT9 and SYT10. Isoform 1: Interacts with STX1A, STX1B and STX2; the interaction is Ca(2+)-dependent. Isoform 2: Is not able to form homodimer and heterodimers. It depends on Ca(2+) as a cofactor. Isoform 1 is expressed in the olfactory bulb. Isoform 2 is expressed in the brain (at protein level).

It localises to the cytoplasmic vesicle. It is found in the secretory vesicle. Its subcellular location is the synaptic vesicle membrane. The protein resides in the membrane. The protein localises to the cytoplasm. It localises to the cytosol. It is found in the cell membrane. Functionally, may be involved in Ca(2+)-dependent exocytosis of secretory vesicles through Ca(2+) and phospholipid binding to the C2 domain or may serve as Ca(2+) sensors in the process of vesicular trafficking and exocytosis. May mediate Ca(2+)-regulation of exocytosis in acrosomal reaction in sperm. The protein is Synaptotagmin-6 (Syt6) of Mus musculus (Mouse).